The sequence spans 354 residues: Homoserine O-succinyltransferase (354 aa).

Residue C146 is the Acyl-thioester intermediate of the active site. Substrate is bound by residues K167 and S196. H239 acts as the Proton acceptor in catalysis. E241 is an active-site residue. Residue R253 participates in substrate binding.

It belongs to the MetA family.

The protein resides in the cytoplasm. It carries out the reaction L-homoserine + succinyl-CoA = O-succinyl-L-homoserine + CoA. Its pathway is amino-acid biosynthesis; L-methionine biosynthesis via de novo pathway; O-succinyl-L-homoserine from L-homoserine: step 1/1. Functionally, transfers a succinyl group from succinyl-CoA to L-homoserine, forming succinyl-L-homoserine. This chain is Homoserine O-succinyltransferase, found in Methylobacter tundripaludum (strain ATCC BAA-1195 / DSM 17260 / SV96).